We begin with the raw amino-acid sequence, 429 residues long: SVP1-like protein 2 (429 aa).

WD repeat units follow at residues 10–48, 50–96, 178–218, and 223–262; these read PVLAPVLSVTFNHDNSCFAVGLDHGFRIYESGSCVLRTS, DFGA…QVGV, AHTS…RLYE, and IDKAIIFSIGFSPSGKYLACTSDKSTLHVFDVTRPGGTRP. The tract at residues 262 to 297 is disordered; that stretch reads PITSNGGTAYAAGEPSVTGNNRPSSPYSVASSSGGG.

This sequence belongs to the WD repeat PROPPIN family.

The protein localises to the vacuole membrane. It is found in the cytoplasmic vesicle membrane. In terms of biological role, involved in mitochondrial or peroxisomal functions and amino acid signaling pathways. The polypeptide is SVP1-like protein 2 (apg-14) (Neurospora crassa (strain ATCC 24698 / 74-OR23-1A / CBS 708.71 / DSM 1257 / FGSC 987)).